We begin with the raw amino-acid sequence, 398 residues long: Succinyl-diaminopimelate desuccinylase (398 aa).

His68 contacts Zn(2+). Residue Asp70 is part of the active site. Zn(2+) is bound at residue Asp101. Residue Glu135 is the Proton acceptor of the active site. 3 residues coordinate Zn(2+): Glu136, Glu164, and His349.

Belongs to the peptidase M20A family. DapE subfamily. As to quaternary structure, homodimer. It depends on Zn(2+) as a cofactor. The cofactor is Co(2+).

It carries out the reaction N-succinyl-(2S,6S)-2,6-diaminopimelate + H2O = (2S,6S)-2,6-diaminopimelate + succinate. It functions in the pathway amino-acid biosynthesis; L-lysine biosynthesis via DAP pathway; LL-2,6-diaminopimelate from (S)-tetrahydrodipicolinate (succinylase route): step 3/3. Its function is as follows. Catalyzes the hydrolysis of N-succinyl-L,L-diaminopimelic acid (SDAP), forming succinate and LL-2,6-diaminopimelate (DAP), an intermediate involved in the bacterial biosynthesis of lysine and meso-diaminopimelic acid, an essential component of bacterial cell walls. In Wolbachia pipientis wMel, this protein is Succinyl-diaminopimelate desuccinylase.